We begin with the raw amino-acid sequence, 147 residues long: Hemoglobin subunit beta-3 (147 aa).

One can recognise a Globin domain in the interval 3–147; that stretch reads HWTAEEKAVI…LVDALSHSYH (145 aa). Heme b-binding residues include histidine 64 and histidine 93.

This sequence belongs to the globin family. Heterotetramer of two alpha chains and two beta chains. Red blood cells.

This is a tadpole (larval) beta chain. This is Hemoglobin subunit beta-3 from Aquarana catesbeiana (American bullfrog).